The primary structure comprises 252 residues: Small ribosomal subunit protein uS2 (252 aa).

This sequence belongs to the universal ribosomal protein uS2 family.

The polypeptide is Small ribosomal subunit protein uS2 (Alcanivorax borkumensis (strain ATCC 700651 / DSM 11573 / NCIMB 13689 / SK2)).